We begin with the raw amino-acid sequence, 388 residues long: 1-deoxy-D-xylulose 5-phosphate reductoisomerase (388 aa).

NADPH is bound by residues threonine 10, glycine 11, serine 12, isoleucine 13, asparagine 37, and asparagine 121. Lysine 122 contacts 1-deoxy-D-xylulose 5-phosphate. Residue glutamate 123 participates in NADPH binding. Aspartate 147 provides a ligand contact to Mn(2+). 1-deoxy-D-xylulose 5-phosphate contacts are provided by serine 148, glutamate 149, serine 173, and histidine 196. Glutamate 149 is a Mn(2+) binding site. Glycine 202 contributes to the NADPH binding site. 1-deoxy-D-xylulose 5-phosphate-binding residues include serine 209, asparagine 214, lysine 215, and glutamate 218. Glutamate 218 is a binding site for Mn(2+).

It belongs to the DXR family. Mg(2+) serves as cofactor. Requires Mn(2+) as cofactor.

It carries out the reaction 2-C-methyl-D-erythritol 4-phosphate + NADP(+) = 1-deoxy-D-xylulose 5-phosphate + NADPH + H(+). It participates in isoprenoid biosynthesis; isopentenyl diphosphate biosynthesis via DXP pathway; isopentenyl diphosphate from 1-deoxy-D-xylulose 5-phosphate: step 1/6. Catalyzes the NADPH-dependent rearrangement and reduction of 1-deoxy-D-xylulose-5-phosphate (DXP) to 2-C-methyl-D-erythritol 4-phosphate (MEP). This is 1-deoxy-D-xylulose 5-phosphate reductoisomerase from Lachnoclostridium phytofermentans (strain ATCC 700394 / DSM 18823 / ISDg) (Clostridium phytofermentans).